A 379-amino-acid chain; its full sequence is Cytochrome b (379 aa).

4 consecutive transmembrane segments (helical) span residues 33–53 (FGSL…FLAM), 77–98 (WLIR…FIHV), 113–133 (WNIG…GYVL), and 178–198 (FFAF…VHLL). Heme b contacts are provided by His83 and His97. 2 residues coordinate heme b: His182 and His196. His201 provides a ligand contact to a ubiquinone. The next 4 membrane-spanning stretches (helical) occupy residues 226–246 (TKDL…ALFF), 288–308 (LGGV…PLLN), 320–340 (VTQV…WIGG), and 347–367 (FTMI…ILMP).

It belongs to the cytochrome b family. In terms of assembly, the cytochrome bc1 complex contains 11 subunits: 3 respiratory subunits (MT-CYB, CYC1 and UQCRFS1), 2 core proteins (UQCRC1 and UQCRC2) and 6 low-molecular weight proteins (UQCRH/QCR6, UQCRB/QCR7, UQCRQ/QCR8, UQCR10/QCR9, UQCR11/QCR10 and a cleavage product of UQCRFS1). This cytochrome bc1 complex then forms a dimer. Heme b serves as cofactor.

The protein localises to the mitochondrion inner membrane. In terms of biological role, component of the ubiquinol-cytochrome c reductase complex (complex III or cytochrome b-c1 complex) that is part of the mitochondrial respiratory chain. The b-c1 complex mediates electron transfer from ubiquinol to cytochrome c. Contributes to the generation of a proton gradient across the mitochondrial membrane that is then used for ATP synthesis. This chain is Cytochrome b (MT-CYB), found in Akodon fumeus (Smoky grass mouse).